A 744-amino-acid polypeptide reads, in one-letter code: MASEGASIPSPVVRQIDKQFLICSICLERYKNPKVLPCLHTFCERCLQNYIPAHSLTLSCPVCRQTSILPEKGVAALQNNFFITNLMDVLQRTPGSNGEDPSILQTVTAVAAGKPLSCPNHDGNVMEFYCQSCETAMCRECTEGEHAEHPTVPLKDVVEQHKASLQVQLDAVNKRLPEIDSALQFISEIIHQLTNQKASIVDDIHSTFDELQKTLNVRKSVLLMELEVNYGLKHKVLQSQLDTLLQGQESIKSCSNFTAQALNHGTETEVLLVKKQMSEKLNELADQDFPLHPRENDQLDFIVETEGLKKSIHNLGTILTTNAVASETVATGEGLRQTIIGQPMSVTITTKDKDGELCKTGNAYLTAELSTPDGSVADGEILDNKNGTYEFLYTVQKEGDFTLSLRLYDQHIRGSPFKLKVIRSADVSPTTEGVKRRVKSPGSGHVKQKAVKRPASMYSTGKRKENPIEDDLIFRVGTKGRNKGEFTNLQGVAASTSGKILIADSNNQCVQIFSNDGQFKSRFGIRGRSPGQLQRPTGVAVHPSGDIIIADYDNKWVSIFSNDGKFKTKIGSGKLMGPKGVSVDRNGHIIVVDNKACCVFIFQPNGKIVTRFGSRGNGDRQFAGPHFAAVNSSNEIIITDFHNHSVKVFNQEGEFMLKFGSNGEGNGQFNAPTGVAVDSNGNIIVADWGNSRIQVFDGSGSFLSYINTSADPLYGPQGLALTSDGHVVVADSGNHCFKVYRYLQ.

Residue Ser10 is modified to Phosphoserine. The segment at 23–64 adopts an RING-type zinc-finger fold; the sequence is CSICLERYKNPKVLPCLHTFCERCLQNYIPAHSLTLSCPVCR. A B box-type zinc finger spans residues 113-154; the sequence is GKPLSCPNHDGNVMEFYCQSCETAMCRECTEGEHAEHPTVPL. Zn(2+) contacts are provided by Cys118, His121, Cys141, and His146. One copy of the Filamin repeat lies at 320–421; it reads TTNAVASETV…IRGSPFKLKV (102 aa). Thr371 bears the Phosphothreonine mark. Ser375, Ser424, and Ser428 each carry phosphoserine. The disordered stretch occupies residues 432 to 462; sequence EGVKRRVKSPGSGHVKQKAVKRPASMYSTGK. NHL repeat units follow at residues 473 to 516, 520 to 563, 564 to 605, 609 to 652, 656 to 699, and 700 to 743; these read IFRV…FSND, KSRF…FSND, GKFK…FQPN, VTRF…FNQE, MLKF…FDGS, and GSFL…YRYL.

This sequence belongs to the TRIM/RBCC family. As to quaternary structure, forms homooligomers. Interacts with TRIM3; this interaction reduces TRIM2 activity. Interacts with myosin V; myosin V may not be a substrate for ubiquitination. Interacts with NEFL. Interacts with phosphorylated BCL2L11. Interacts with SIRPA. RING-type zinc finger-dependent and UBE2D1-dependent autoubiquitination.

It carries out the reaction S-ubiquitinyl-[E2 ubiquitin-conjugating enzyme]-L-cysteine + [acceptor protein]-L-lysine = [E2 ubiquitin-conjugating enzyme]-L-cysteine + N(6)-ubiquitinyl-[acceptor protein]-L-lysine.. It functions in the pathway protein modification; protein ubiquitination. Functionally, UBE2D1-dependent E3 ubiquitin-protein ligase that mediates the ubiquitination of NEFL and of phosphorylated BCL2L11. Plays a neuroprotective function. May play a role in neuronal rapid ischemic tolerance. Plays a role in antiviral immunity and limits New World arenavirus infection independently of its ubiquitin ligase activity. The sequence is that of Tripartite motif-containing protein 2 (Trim2) from Rattus norvegicus (Rat).